A 339-amino-acid chain; its full sequence is Uroporphyrinogen decarboxylase (339 aa).

Residues 21–25 (RQAGR), Phe40, Asp71, Tyr147, Ser202, and His315 contribute to the substrate site.

The protein belongs to the uroporphyrinogen decarboxylase family. Homodimer.

It is found in the cytoplasm. It catalyses the reaction uroporphyrinogen III + 4 H(+) = coproporphyrinogen III + 4 CO2. It participates in porphyrin-containing compound metabolism; protoporphyrin-IX biosynthesis; coproporphyrinogen-III from 5-aminolevulinate: step 4/4. Its function is as follows. Catalyzes the decarboxylation of four acetate groups of uroporphyrinogen-III to yield coproporphyrinogen-III. In Helicobacter pylori (strain J99 / ATCC 700824) (Campylobacter pylori J99), this protein is Uroporphyrinogen decarboxylase.